The following is a 241-amino-acid chain: Transforming protein p29 (241 aa).

Residues 1–41 are disordered; that stretch reads MPAARAAPAADEPMRDPVAPVRAPALPRPAPGAVAPASGGA. S-palmitoyl cysteine; by host attachment occurs at residues Cys-233 and Cys-236. At Cys-238 the chain carries Cysteine methyl ester; by host. The S-farnesyl cysteine; by host moiety is linked to residue Cys-238. Residues 239-241 constitute a propeptide, removed in mature form; the sequence is VLS.

This sequence belongs to the small GTPase superfamily. Ras family.

It localises to the host cell membrane. It carries out the reaction GTP + H2O = GDP + phosphate + H(+). Alternates between an inactive form bound to GDP and an active form bound to GTP. Activated by a guanine nucleotide-exchange factor (GEF) and inactivated by a GTPase-activating protein (GAP). This Mus musculus (Mouse) protein is Transforming protein p29 (H-RAS).